Consider the following 105-residue polypeptide: Large ribosomal subunit protein uL24 (105 aa).

Belongs to the universal ribosomal protein uL24 family. As to quaternary structure, part of the 50S ribosomal subunit.

Functionally, one of two assembly initiator proteins, it binds directly to the 5'-end of the 23S rRNA, where it nucleates assembly of the 50S subunit. One of the proteins that surrounds the polypeptide exit tunnel on the outside of the subunit. The chain is Large ribosomal subunit protein uL24 from Methylobacillus flagellatus (strain ATCC 51484 / DSM 6875 / VKM B-1610 / KT).